Reading from the N-terminus, the 249-residue chain is tRNA pseudouridine synthase A (249 aa).

Catalysis depends on Asp-53, which acts as the Nucleophile. Tyr-111 contacts substrate.

This sequence belongs to the tRNA pseudouridine synthase TruA family. In terms of assembly, homodimer.

It carries out the reaction uridine(38/39/40) in tRNA = pseudouridine(38/39/40) in tRNA. Its function is as follows. Formation of pseudouridine at positions 38, 39 and 40 in the anticodon stem and loop of transfer RNAs. The chain is tRNA pseudouridine synthase A from Streptococcus pneumoniae (strain 70585).